A 206-amino-acid polypeptide reads, in one-letter code: Histidine biosynthesis bifunctional protein HisIE (206 aa).

A phosphoribosyl-AMP cyclohydrolase region spans residues 1 to 117; sequence MGSETTAAGD…SCFPTAPSQF (117 aa). Residues 118-206 are phosphoribosyl-ATP pyrophosphohydrolase; that stretch reads LGSLDALIAE…AVALLESRHK (89 aa).

It in the N-terminal section; belongs to the PRA-CH family. This sequence in the C-terminal section; belongs to the PRA-PH family.

It is found in the cytoplasm. It catalyses the reaction 1-(5-phospho-beta-D-ribosyl)-ATP + H2O = 1-(5-phospho-beta-D-ribosyl)-5'-AMP + diphosphate + H(+). The enzyme catalyses 1-(5-phospho-beta-D-ribosyl)-5'-AMP + H2O = 1-(5-phospho-beta-D-ribosyl)-5-[(5-phospho-beta-D-ribosylamino)methylideneamino]imidazole-4-carboxamide. It functions in the pathway amino-acid biosynthesis; L-histidine biosynthesis; L-histidine from 5-phospho-alpha-D-ribose 1-diphosphate: step 2/9. The protein operates within amino-acid biosynthesis; L-histidine biosynthesis; L-histidine from 5-phospho-alpha-D-ribose 1-diphosphate: step 3/9. The polypeptide is Histidine biosynthesis bifunctional protein HisIE (Xanthomonas campestris pv. campestris (strain ATCC 33913 / DSM 3586 / NCPPB 528 / LMG 568 / P 25)).